Consider the following 288-residue polypeptide: Pantothenate synthetase (288 aa).

30–37 (MGALHEGH) is a binding site for ATP. H37 functions as the Proton donor in the catalytic mechanism. Q61 serves as a coordination point for (R)-pantoate. Q61 provides a ligand contact to beta-alanine. An ATP-binding site is contributed by 147 to 150 (GEKD). Q153 contributes to the (R)-pantoate binding site. Residues L176 and 184–187 (ISSR) each bind ATP.

Belongs to the pantothenate synthetase family. In terms of assembly, homodimer.

It is found in the cytoplasm. It carries out the reaction (R)-pantoate + beta-alanine + ATP = (R)-pantothenate + AMP + diphosphate + H(+). The protein operates within cofactor biosynthesis; (R)-pantothenate biosynthesis; (R)-pantothenate from (R)-pantoate and beta-alanine: step 1/1. Its function is as follows. Catalyzes the condensation of pantoate with beta-alanine in an ATP-dependent reaction via a pantoyl-adenylate intermediate. The sequence is that of Pantothenate synthetase from Prosthecochloris aestuarii (strain DSM 271 / SK 413).